Here is a 333-residue protein sequence, read N- to C-terminus: B3 domain-containing transcription factor NGA4 (333 aa).

A DNA-binding region (TF-B3) is located at residues 36 to 145 (FDKVLTPSDV…KIMFIDWRPR (110 aa)). The disordered stretch occupies residues 268–333 (VEESSSSGDT…YKRKGKSLEL (66 aa)). Residues 323-333 (EYKRKGKSLEL) are compositionally biased toward basic and acidic residues.

It is found in the nucleus. Regulates lateral organ growth. Functionally redundant with NGA1, NGA2 and NGA3. This Arabidopsis thaliana (Mouse-ear cress) protein is B3 domain-containing transcription factor NGA4 (NGA4).